Consider the following 266-residue polypeptide: Shikimate dehydrogenase (NADP(+)) (266 aa).

Residues 14–16 (SLS) and T61 contribute to the shikimate site. K65 acts as the Proton acceptor in catalysis. N85 and D100 together coordinate shikimate. NADP(+) contacts are provided by residues 124 to 128 (GAGGA) and A210. Y212 is a shikimate binding site. An NADP(+)-binding site is contributed by G233.

Belongs to the shikimate dehydrogenase family. As to quaternary structure, homodimer.

It carries out the reaction shikimate + NADP(+) = 3-dehydroshikimate + NADPH + H(+). It functions in the pathway metabolic intermediate biosynthesis; chorismate biosynthesis; chorismate from D-erythrose 4-phosphate and phosphoenolpyruvate: step 4/7. Its function is as follows. Involved in the biosynthesis of the chorismate, which leads to the biosynthesis of aromatic amino acids. Catalyzes the reversible NADPH linked reduction of 3-dehydroshikimate (DHSA) to yield shikimate (SA). The protein is Shikimate dehydrogenase (NADP(+)) of Halobacterium salinarum (strain ATCC 29341 / DSM 671 / R1).